The chain runs to 109 residues: DNA-directed RNA polymerase subunit I (109 aa).

The enzyme catalyses RNA(n) + a ribonucleoside 5'-triphosphate = RNA(n+1) + diphosphate. In terms of biological role, DNA-dependent RNA polymerase catalyzes the transcription of DNA into RNA using the four ribonucleoside triphosphates as substrates. This is DNA-directed RNA polymerase subunit I (rpoI) from Methanocaldococcus jannaschii (strain ATCC 43067 / DSM 2661 / JAL-1 / JCM 10045 / NBRC 100440) (Methanococcus jannaschii).